Reading from the N-terminus, the 377-residue chain is Alanine racemase, catabolic (377 aa).

Lysine 51 functions as the Proton acceptor; specific for D-alanine in the catalytic mechanism. Lysine 51 is modified (N6-(pyridoxal phosphate)lysine). Substrate is bound at residue arginine 150. Tyrosine 272 functions as the Proton acceptor; specific for L-alanine in the catalytic mechanism. Methionine 320 provides a ligand contact to substrate.

The protein belongs to the alanine racemase family. The cofactor is pyridoxal 5'-phosphate.

It catalyses the reaction L-alanine = D-alanine. Functionally, isomerizes L-alanine to D-alanine which is then oxidized to pyruvate by DadA. The chain is Alanine racemase, catabolic (dadX) from Rhizobium johnstonii (strain DSM 114642 / LMG 32736 / 3841) (Rhizobium leguminosarum bv. viciae).